A 207-amino-acid polypeptide reads, in one-letter code: MAPGEPFSQRRIGLTGGIASGKSSVGRWLAQQGLPVLDADQFAREALAPGHPATNSVMQRYGSTVRAEATEAIDRAALGRIVFHDPAERRWLEHLIHPIVRERFDQALSLHADTPAVVLMIPLLFEAGLESLCSEIWLVDCDESQQLERLIARDGLSPKAAQARIAAQWPLNQKRGLADHVVANQGHPGAWQPQARELLKMSPTAEL.

Residues 11–207 enclose the DPCK domain; sequence RIGLTGGIAS…LLKMSPTAEL (197 aa). Position 19-24 (19-24) interacts with ATP; sequence ASGKSS.

It belongs to the CoaE family.

The protein localises to the cytoplasm. It carries out the reaction 3'-dephospho-CoA + ATP = ADP + CoA + H(+). Its pathway is cofactor biosynthesis; coenzyme A biosynthesis; CoA from (R)-pantothenate: step 5/5. Catalyzes the phosphorylation of the 3'-hydroxyl group of dephosphocoenzyme A to form coenzyme A. The polypeptide is Dephospho-CoA kinase (Synechococcus sp. (strain CC9605)).